Consider the following 316-residue polypeptide: Porphobilinogen deaminase (316 aa).

Position 245 is an S-(dipyrrolylmethanemethyl)cysteine (Cys245).

The protein belongs to the HMBS family. Monomer. Requires dipyrromethane as cofactor.

The catalysed reaction is 4 porphobilinogen + H2O = hydroxymethylbilane + 4 NH4(+). It participates in porphyrin-containing compound metabolism; protoporphyrin-IX biosynthesis; coproporphyrinogen-III from 5-aminolevulinate: step 2/4. It functions in the pathway porphyrin-containing compound metabolism; chlorophyll biosynthesis. In terms of biological role, tetrapolymerization of the monopyrrole PBG into the hydroxymethylbilane pre-uroporphyrinogen in several discrete steps. The protein is Porphobilinogen deaminase of Prochlorococcus marinus (strain MIT 9515).